The sequence spans 721 residues: Homeobox-leucine zipper protein HDG2 (721 aa).

Residues 17-70 (NNHNYNHEDNNNEGFLRDDEFDSPNTKSGSENQEGGSGNDQDPLHPNKKKRYHR) form a disordered region. The span at 21 to 34 (YNHEDNNNEGFLRD) shows a compositional bias: basic and acidic residues. A DNA-binding region (homeobox) is located at residues 64 to 123 (KKKRYHRHTQLQIQEMEAFFKECPHPDDKQRKQLSRELNLEPLQVKFWFQNKRTQMKNHH). Residues 120-194 (KNHHERHENS…DRISAIAAKY (75 aa)) adopt a coiled-coil conformation. The 227-residue stretch at 242 to 468 (TESDKPVIID…LDRQCERLAS (227 aa)) folds into the START domain.

Belongs to the HD-ZIP homeobox family. Class IV subfamily. Interacts with AIL7/PLT7, ANT, BBM and AIL1. As to expression, expressed in hairless cell files of the hypocotyl epidermis. Expressed in shoot apical meristem (SAM) with higher levels in L1 cells and the epidermal layer of young leaves. Expressed in primary root tips, in the L1 of apical inflorescence meristems, early flower primordia, carpel epidermis, ovule primordia, nucellus, chalaze and seed coat.

The protein localises to the nucleus. Functionally, probable transcription factor. Involved, together with PDF2, in the regulation of flower organs development by promoting the expression of APETALA 3 (AP3) in the epidermis and internal cell layers of developing flowers. The polypeptide is Homeobox-leucine zipper protein HDG2 (Arabidopsis thaliana (Mouse-ear cress)).